Here is a 175-residue protein sequence, read N- to C-terminus: Co-chaperone protein HscB homolog (175 aa).

The region spanning 7 to 79 (SHFDLFHLPA…LKRASYLLSL (73 aa)) is the J domain.

The protein belongs to the HscB family. As to quaternary structure, interacts with HscA and stimulates its ATPase activity.

Functionally, co-chaperone involved in the maturation of iron-sulfur cluster-containing proteins. Seems to help targeting proteins to be folded toward HscA. The protein is Co-chaperone protein HscB homolog of Burkholderia cenocepacia (strain ATCC BAA-245 / DSM 16553 / LMG 16656 / NCTC 13227 / J2315 / CF5610) (Burkholderia cepacia (strain J2315)).